Reading from the N-terminus, the 428-residue chain is Trigger factor (428 aa).

The 86-residue stretch at 163-248 (GDMVIIDYKG…IHEIKEKEVP (86 aa)) folds into the PPIase FKBP-type domain.

This sequence belongs to the FKBP-type PPIase family. Tig subfamily.

The protein resides in the cytoplasm. The catalysed reaction is [protein]-peptidylproline (omega=180) = [protein]-peptidylproline (omega=0). In terms of biological role, involved in protein export. Acts as a chaperone by maintaining the newly synthesized protein in an open conformation. Functions as a peptidyl-prolyl cis-trans isomerase. This chain is Trigger factor, found in Alkaliphilus oremlandii (strain OhILAs) (Clostridium oremlandii (strain OhILAs)).